The following is a 342-amino-acid chain: Cytochrome f (342 aa).

A signal peptide spans 1 to 28; that stretch reads MKKQWIAGAFGLTAALAGLVSVPQSALA. Heme is bound by residues cysteine 48, cysteine 51, and histidine 52. The helical transmembrane segment at 305 to 325 threads the bilayer; that stretch reads VTWLVAFLAAAFICQLLLVLK.

The protein belongs to the cytochrome f family. As to quaternary structure, the 4 large subunits of the cytochrome b6-f complex are cytochrome b6, subunit IV (17 kDa polypeptide, PetD), cytochrome f and the Rieske protein, while the 4 small subunits are PetG, PetL, PetM and PetN. The complex functions as a dimer. The cofactor is heme.

It localises to the cell inner membrane. Functionally, component of the cytochrome b6-f complex, which mediates electron transfer between photosystem II (PSII) and photosystem I (PSI), cyclic electron flow around PSI, and state transitions. This Gloeobacter violaceus (strain ATCC 29082 / PCC 7421) protein is Cytochrome f (petA).